Here is a 246-residue protein sequence, read N- to C-terminus: Ribonuclease PH (246 aa).

Phosphate contacts are provided by residues Arg-91 and 129–131 (GTR).

Belongs to the RNase PH family. In terms of assembly, homohexameric ring arranged as a trimer of dimers.

It catalyses the reaction tRNA(n+1) + phosphate = tRNA(n) + a ribonucleoside 5'-diphosphate. Phosphorolytic 3'-5' exoribonuclease that plays an important role in tRNA 3'-end maturation. Removes nucleotide residues following the 3'-CCA terminus of tRNAs; can also add nucleotides to the ends of RNA molecules by using nucleoside diphosphates as substrates, but this may not be physiologically important. Probably plays a role in initiation of 16S rRNA degradation (leading to ribosome degradation) during starvation. This chain is Ribonuclease PH, found in Paraburkholderia phymatum (strain DSM 17167 / CIP 108236 / LMG 21445 / STM815) (Burkholderia phymatum).